A 757-amino-acid chain; its full sequence is MAVHRGSALVAPASDKVQKNKSAQTSGLKQGSRMEKILGFEWTDLSSWQSVVTLLNKPTDPANLAVFRFLFAFLMLLDIPQERGLSSLDRKYLDGLDVCRFPLLDALRPLPLDWMYLVYTIMFLGALGMMLGLCYRLSCVLFLLPYWYVFLLDKTSWNNHSYLYGLLAFQLTFMDANHYWSVDGLLNARKKNAHVPLWNYTVLRGQIFIVYFIAGVKKLDADWVGGYSMEHLSRHWLFSPFKLVLSEELTSLLVVHWCGLLLDLSAGFLLFFDASRPVGLFFVSYFHCMNSQLFSIGMFPYVMLASSPLFCSAEWPRKLVARCPKRLQELLPTKAAPRPSASCVYKRSRGKAGPKPGLRHQLGAIFTLLYLLEQLFLPYSHFLTQGYNNWTNGLYGYSWDMMVHSRSHQHVKITYRDGLTGELGYLNPGVFTQSRRWKDHADMLKQYATCLSLLLPKYNVTEPQIYFDIWVSINDRFQQRLFDPRVDIVQAVWSPFQRTPWVQPLLMDLSPWRTKLQDIKSSLDNHTEVVFIADFPGLHLENFVSEDLGNTSIQLLQGEVTVELVAEQKNQTLQEGEKMQLPAGEYHKVYTVSSSPSCYMYVYVNTTEVALEQDLAYLQELKEKVENGSETGPLPPELQPLLEGEVKGGPEPTPLVQTFLRRQRKLQEIERRRNSPFHERFLRFVLRKLYVFRRSFLMTRISLRNLLLGRPSLEQLAQEVTYANLRPFEPVDESSASNTDSSNHPSEPDSEHVHSEF.

An N-acetylalanine modification is found at Ala-2. Residues 2 to 60 (AVHRGSALVAPASDKVQKNKSAQTSGLKQGSRMEKILGFEWTDLSSWQSVVTLLNKPTD) lie on the Cytoplasmic side of the membrane. Residues 61–81 (PANLAVFRFLFAFLMLLDIPQ) form a helical membrane-spanning segment. Residues 82–113 (ERGLSSLDRKYLDGLDVCRFPLLDALRPLPLD) are Lumenal-facing. Cysteines 99 and 450 form a disulfide. A helical transmembrane segment spans residues 114-134 (WMYLVYTIMFLGALGMMLGLC). The Cytoplasmic portion of the chain corresponds to 135 to 136 (YR). The chain crosses the membrane as a helical span at residues 137 to 157 (LSCVLFLLPYWYVFLLDKTSW). The Lumenal segment spans residues 158–292 (NNHSYLYGLL…VSYFHCMNSQ (135 aa)). The helical transmembrane segment at 293–313 (LFSIGMFPYVMLASSPLFCSA) threads the bilayer. The Cytoplasmic segment spans residues 314–361 (EWPRKLVARCPKRLQELLPTKAAPRPSASCVYKRSRGKAGPKPGLRHQ). Residues 362–382 (LGAIFTLLYLLEQLFLPYSHF) form a helical membrane-spanning segment. Over 383–757 (LTQGYNNWTN…PDSEHVHSEF (375 aa)) the chain is Lumenal. The interval 729–757 (EPVDESSASNTDSSNHPSEPDSEHVHSEF) is disordered. Positions 734-745 (SSASNTDSSNHP) are enriched in polar residues. A compositionally biased stretch (basic and acidic residues) spans 746–757 (SEPDSEHVHSEF).

This sequence belongs to the vitamin K-dependent gamma-carboxylase family. Monomer. May interact with CALU.

The protein localises to the endoplasmic reticulum membrane. It catalyses the reaction 4-carboxy-L-glutamyl-[protein] + 2,3-epoxyphylloquinone + H2O + H(+) = phylloquinol + L-glutamyl-[protein] + CO2 + O2. Functionally, mediates the vitamin K-dependent carboxylation of glutamate residues to calcium-binding gamma-carboxyglutamate (Gla) residues with the concomitant conversion of the reduced hydroquinone form of vitamin K to vitamin K epoxide. Catalyzes gamma-carboxylation of various proteins, such as blood coagulation factors (F2, F7, F9 and F10), osteocalcin (bglap and bglap2) or matrix Gla protein (MGP). In Mus musculus (Mouse), this protein is Vitamin K-dependent gamma-carboxylase (Ggcx).